Consider the following 377-residue polypeptide: Phospho-N-acetylmuramoyl-pentapeptide-transferase (377 aa).

10 helical membrane passes run 27–47 (TAFA…YVIE), 71–91 (GTPT…TLLW), 94–114 (LSDP…AIGF), 139–159 (ILAS…GSYS), 182–202 (VPHL…IVIV), 216–236 (GLAI…TYVS), 252–272 (MVGE…GFLW), 280–300 (IFMG…VAVV), 305–325 (LLLP…ILQV), and 354–374 (KVIV…LTTL).

Belongs to the glycosyltransferase 4 family. MraY subfamily. It depends on Mg(2+) as a cofactor.

Its subcellular location is the cell inner membrane. The catalysed reaction is UDP-N-acetyl-alpha-D-muramoyl-L-alanyl-gamma-D-glutamyl-meso-2,6-diaminopimeloyl-D-alanyl-D-alanine + di-trans,octa-cis-undecaprenyl phosphate = di-trans,octa-cis-undecaprenyl diphospho-N-acetyl-alpha-D-muramoyl-L-alanyl-D-glutamyl-meso-2,6-diaminopimeloyl-D-alanyl-D-alanine + UMP. The protein operates within cell wall biogenesis; peptidoglycan biosynthesis. Its function is as follows. Catalyzes the initial step of the lipid cycle reactions in the biosynthesis of the cell wall peptidoglycan: transfers peptidoglycan precursor phospho-MurNAc-pentapeptide from UDP-MurNAc-pentapeptide onto the lipid carrier undecaprenyl phosphate, yielding undecaprenyl-pyrophosphoryl-MurNAc-pentapeptide, known as lipid I. This chain is Phospho-N-acetylmuramoyl-pentapeptide-transferase, found in Acidobacterium capsulatum (strain ATCC 51196 / DSM 11244 / BCRC 80197 / JCM 7670 / NBRC 15755 / NCIMB 13165 / 161).